A 240-amino-acid polypeptide reads, in one-letter code: MSNPAAVTAGRGSITHVIFDMDGLLLDTEKFYTEVQEIILARFNKKFDWSLKAKMMGRKAIEAARIFVEESGISDSLSAEDFLVERESMLQDLFPTSELMPGASRLIKHLHVKNIPICIATGTHTRHYDLKTQRHRELFSLMHHVVRGDDPEVKQGKPAPDGFLAAARRFKDGPVDSQKVLVFEDAPSGVLAAKNAGMNVVMVPDPRLDISHQDVADQIITSLVDFKPEEWGLPPFEDSN.

Aspartate 20 (nucleophile) is an active-site residue. Mg(2+) contacts are provided by aspartate 20, aspartate 22, and aspartate 185. Aspartate 22 acts as the Proton donor in catalysis.

The protein belongs to the HAD-like hydrolase superfamily. DOG/GPP family. Requires Mg(2+) as cofactor. As to expression, ubiquitous with highest expression in siliques. Mainly restricted to the meristem of immature flower and vascular elements of the root, shoot, leave, siliqua and developing embryo (at the protein level).

The protein localises to the cytoplasm. The catalysed reaction is sn-glycerol 1-phosphate + H2O = glycerol + phosphate. The enzyme catalyses sn-glycerol 3-phosphate + H2O = glycerol + phosphate. In terms of biological role, acts as a glycerol-3-phosphatase with higher stereospecificity for L-glycerol-3-phosphate than DL-glycerol-3-phosphate. This chain is (DL)-glycerol-3-phosphatase 2 (GPP2), found in Arabidopsis thaliana (Mouse-ear cress).